Here is a 345-residue protein sequence, read N- to C-terminus: Biotin synthase (345 aa).

The Radical SAM core domain occupies asparagine 39–arginine 266. The [4Fe-4S] cluster site is built by cysteine 54, cysteine 58, and cysteine 61. [2Fe-2S] cluster contacts are provided by cysteine 98, cysteine 129, cysteine 189, and arginine 261.

It belongs to the radical SAM superfamily. Biotin synthase family. In terms of assembly, homodimer. [4Fe-4S] cluster serves as cofactor. Requires [2Fe-2S] cluster as cofactor.

The enzyme catalyses (4R,5S)-dethiobiotin + (sulfur carrier)-SH + 2 reduced [2Fe-2S]-[ferredoxin] + 2 S-adenosyl-L-methionine = (sulfur carrier)-H + biotin + 2 5'-deoxyadenosine + 2 L-methionine + 2 oxidized [2Fe-2S]-[ferredoxin]. Its pathway is cofactor biosynthesis; biotin biosynthesis; biotin from 7,8-diaminononanoate: step 2/2. Catalyzes the conversion of dethiobiotin (DTB) to biotin by the insertion of a sulfur atom into dethiobiotin via a radical-based mechanism. This is Biotin synthase from Idiomarina loihiensis (strain ATCC BAA-735 / DSM 15497 / L2-TR).